A 320-amino-acid polypeptide reads, in one-letter code: Ferrochelatase (320 aa).

Positions 194 and 275 each coordinate Fe cation.

This sequence belongs to the ferrochelatase family.

The protein resides in the cytoplasm. It carries out the reaction heme b + 2 H(+) = protoporphyrin IX + Fe(2+). It functions in the pathway porphyrin-containing compound metabolism; protoheme biosynthesis; protoheme from protoporphyrin-IX: step 1/1. Catalyzes the ferrous insertion into protoporphyrin IX. The protein is Ferrochelatase of Enterobacter sp. (strain 638).